The chain runs to 451 residues: 1,3-beta-glucanosyltransferase PGA4 (451 aa).

A signal peptide spans 1 to 18; that stretch reads MLFRSLVTYLSLVSSVLS. Position 81 (Tyr81) interacts with (1,3-beta-D-glucosyl)n. Asn88 is a glycosylation site (N-linked (GlcNAc...) asparagine). (1,3-beta-D-glucosyl)n is bound by residues 108–116, Asn151, Glu152, and Arg198; that span reads NTPHSSITR. The active-site Proton donor is the Glu152. Asn245 carries an N-linked (GlcNAc...) asparagine glycan. The active-site Nucleophile is the Glu254. Tyr286 serves as a coordination point for (1,3-beta-D-glucosyl)n. The tract at residues 316-336 is disordered; sequence SQFEKTKNPSGDGGYLKSTGG. Residues Asn347, Asn394, and Asn422 are each glycosylated (N-linked (GlcNAc...) asparagine). The interval 395 to 427 is disordered; the sequence is YTSSITASSRASPSQTSQVSSSSATSANSTSSK. The segment covering 396–426 has biased composition (low complexity); that stretch reads TSSITASSRASPSQTSQVSSSSATSANSTSS. Asp430 carries the GPI-anchor amidated aspartate lipid modification. Positions 431–451 are cleaved as a propeptide — removed in mature form; that stretch reads AAVEGAGFLSVIALAAGIALL.

Belongs to the glycosyl hydrolase 72 family. In terms of processing, the GPI-anchor is attached to the protein in the endoplasmic reticulum and serves to target the protein to the cell surface. There, the glucosamine-inositol phospholipid moiety is cleaved off and the GPI-modified mannoprotein is covalently attached via its lipidless GPI glycan remnant to the 1,6-beta-glucan of the outer cell wall layer.

It localises to the secreted. It is found in the cell wall. The protein localises to the membrane. Its function is as follows. Splits internally a 1,3-beta-glucan molecule and transfers the newly generated reducing end (the donor) to the non-reducing end of another 1,3-beta-glucan molecule (the acceptor) forming a 1,3-beta linkage, resulting in the elongation of 1,3-beta-glucan chains in the cell wall. Involved in cell wall biosynthesis and morphogenesis. Plays a key role in virulence. The protein is 1,3-beta-glucanosyltransferase PGA4 (PGA4) of Candida albicans (strain SC5314 / ATCC MYA-2876) (Yeast).